A 224-amino-acid chain; its full sequence is Protein GrpE (224 aa).

Polar residues-rich tracts occupy residues 1 to 16 (MSGDASTSAQDQNVES) and 209 to 224 (ESSSDAASEQPQEGDA). Disordered stretches follow at residues 1 to 35 (MSGDASTSAQDQNVESNDVPAIPDVDAGTPIDPVV) and 203 to 224 (SMGPGPESSSDAASEQPQEGDA).

The protein belongs to the GrpE family. As to quaternary structure, homodimer.

Its subcellular location is the cytoplasm. Functionally, participates actively in the response to hyperosmotic and heat shock by preventing the aggregation of stress-denatured proteins, in association with DnaK and GrpE. It is the nucleotide exchange factor for DnaK and may function as a thermosensor. Unfolded proteins bind initially to DnaJ; upon interaction with the DnaJ-bound protein, DnaK hydrolyzes its bound ATP, resulting in the formation of a stable complex. GrpE releases ADP from DnaK; ATP binding to DnaK triggers the release of the substrate protein, thus completing the reaction cycle. Several rounds of ATP-dependent interactions between DnaJ, DnaK and GrpE are required for fully efficient folding. This chain is Protein GrpE, found in Synechococcus sp. (strain CC9902).